A 411-amino-acid chain; its full sequence is Multidrug resistance protein MdtH (411 aa).

The next 11 helical transmembrane spans lie at 13-33, 45-65, 73-95, 99-116, 139-159, 165-185, 213-233, 243-263, 288-308, 340-360, and 365-385; these read YFLL…FPLI, ALLV…LGIF, LGAK…FMGI, PWLL…GTLF, LLMI…SWLL, LVCL…AWLL, YVFT…ILPI, AAVR…LYPI, IIPI…GIFY, LGLA…YDMG, and IPQL…LGFY.

The protein belongs to the major facilitator superfamily. DHA1 family. MdtH (TC 2.A.1.2.21) subfamily.

It is found in the cell membrane. This chain is Multidrug resistance protein MdtH, found in Baumannia cicadellinicola subsp. Homalodisca coagulata.